The sequence spans 100 residues: Urease subunit gamma (100 aa).

The protein belongs to the urease gamma subunit family. In terms of assembly, heterotrimer of UreA (gamma), UreB (beta) and UreC (alpha) subunits. Three heterotrimers associate to form the active enzyme.

Its subcellular location is the cytoplasm. It catalyses the reaction urea + 2 H2O + H(+) = hydrogencarbonate + 2 NH4(+). It functions in the pathway nitrogen metabolism; urea degradation; CO(2) and NH(3) from urea (urease route): step 1/1. This chain is Urease subunit gamma, found in Acinetobacter baylyi (strain ATCC 33305 / BD413 / ADP1).